The primary structure comprises 281 residues: MGAFVNTKVYIENKNIRDWLSEALSMFMYMSLLLGSAATGHFSGREDDALFGVIFQGFSITFGIYIGGAMSGAIINPALTLAVALLGKISWRKCIVLQSAQYIGSFIASAVVYLIYNDSLDAFGAGANFTATEPGVFRKDVAGIWSTFPKTYLKERGAIFNQIFCSMLLTFGFLAISDYKNFRPSKGLFPIAVGLLVMTVFLAFSYSTGAAMNPARDFSPRLWSLIIGYGIEVFSYNQYEWFWIPWLMPYVGAMLGALIYQLLIGAQWSKGQKGESKHKDP.

Over 1 to 17 (MGAFVNTKVYIENKNIR) the chain is Cytoplasmic. Residues 18–36 (DWLSEALSMFMYMSLLLGS) traverse the membrane as a helical segment. The Extracellular portion of the chain corresponds to 37–50 (AATGHFSGREDDAL). A helical membrane pass occupies residues 51-69 (FGVIFQGFSITFGIYIGGA). At 70–71 (MS) the chain is on the cytoplasmic side. The segment at residues 72 to 84 (GAIINPALTLAVA) is an intramembrane region (discontinuously helical). The NPA 1 motif lies at 76 to 78 (NPA). Over 85–90 (LLGKIS) the chain is Cytoplasmic. Residues 91–115 (WRKCIVLQSAQYIGSFIASAVVYLI) form a helical membrane-spanning segment. Residues 116–157 (YNDSLDAFGAGANFTATEPGVFRKDVAGIWSTFPKTYLKERG) are Extracellular-facing. 2 N-linked (GlcNAc...) asparagine glycosylation sites follow: Asn-117 and Asn-128. Residues 158–175 (AIFNQIFCSMLLTFGFLA) form a helical membrane-spanning segment. At 176–187 (ISDYKNFRPSKG) the chain is on the cytoplasmic side. Residues 188–204 (LFPIAVGLLVMTVFLAF) traverse the membrane as a helical segment. The Extracellular portion of the chain corresponds to 205-207 (SYS). The segment at residues 208 to 222 (TGAAMNPARDFSPRL) is an intramembrane region (discontinuously helical). The short motif at 213–215 (NPA) is the NPA 2 element. At 223–241 (WSLIIGYGIEVFSYNQYEW) the chain is on the extracellular side. A helical transmembrane segment spans residues 242–262 (FWIPWLMPYVGAMLGALIYQL). Residues 263-281 (LIGAQWSKGQKGESKHKDP) lie on the Cytoplasmic side of the membrane.

The protein belongs to the MIP/aquaporin (TC 1.A.8) family.

It localises to the cell membrane. It carries out the reaction H2O(in) = H2O(out). In terms of biological role, aquaglyceroporin that may modulate the water content and osmolytes during anhydrobiosis. The protein is Aquaporin-9 of Milnesium tardigradum (Water bear).